Reading from the N-terminus, the 103-residue chain is Small ribosomal subunit protein uS10 (103 aa).

Belongs to the universal ribosomal protein uS10 family. As to quaternary structure, part of the 30S ribosomal subunit.

Functionally, involved in the binding of tRNA to the ribosomes. The chain is Small ribosomal subunit protein uS10 from Natranaerobius thermophilus (strain ATCC BAA-1301 / DSM 18059 / JW/NM-WN-LF).